Here is a 563-residue protein sequence, read N- to C-terminus: Arginine--tRNA ligase (563 aa).

A 'HIGH' region motif is present at residues Pro-121–His-131.

Belongs to the class-I aminoacyl-tRNA synthetase family. In terms of assembly, monomer.

Its subcellular location is the cytoplasm. It catalyses the reaction tRNA(Arg) + L-arginine + ATP = L-arginyl-tRNA(Arg) + AMP + diphosphate. This Streptococcus pneumoniae (strain Hungary19A-6) protein is Arginine--tRNA ligase.